The sequence spans 230 residues: Uracil-DNA glycosylase (230 aa).

The active-site Proton acceptor is the D70.

The protein belongs to the uracil-DNA glycosylase (UDG) superfamily. UNG family.

Its subcellular location is the cytoplasm. The enzyme catalyses Hydrolyzes single-stranded DNA or mismatched double-stranded DNA and polynucleotides, releasing free uracil.. In terms of biological role, excises uracil residues from the DNA which can arise as a result of misincorporation of dUMP residues by DNA polymerase or due to deamination of cytosine. This Campylobacter concisus (strain 13826) protein is Uracil-DNA glycosylase.